The primary structure comprises 190 residues: Peptidyl-prolyl cis-trans isomerase A (190 aa).

Positions 1 to 24 (MLKSTLAAVAAVFALSALSPAALA) are cleaved as a signal peptide. The region spanning 27–188 (GDPHVLLTTS…KPVVILSAKV (162 aa)) is the PPIase cyclophilin-type domain.

Belongs to the cyclophilin-type PPIase family.

The protein localises to the periplasm. The enzyme catalyses [protein]-peptidylproline (omega=180) = [protein]-peptidylproline (omega=0). PPIases accelerate the folding of proteins. It catalyzes the cis-trans isomerization of proline imidic peptide bonds in oligopeptides. The chain is Peptidyl-prolyl cis-trans isomerase A (ppiA) from Salmonella typhimurium (strain LT2 / SGSC1412 / ATCC 700720).